A 400-amino-acid polypeptide reads, in one-letter code: Nicotinate phosphoribosyltransferase (400 aa).

Residue His220 is modified to Phosphohistidine; by autocatalysis.

The protein belongs to the NAPRTase family. Transiently phosphorylated on a His residue during the reaction cycle. Phosphorylation strongly increases the affinity for substrates and increases the rate of nicotinate D-ribonucleotide production. Dephosphorylation regenerates the low-affinity form of the enzyme, leading to product release.

It catalyses the reaction nicotinate + 5-phospho-alpha-D-ribose 1-diphosphate + ATP + H2O = nicotinate beta-D-ribonucleotide + ADP + phosphate + diphosphate. Its pathway is cofactor biosynthesis; NAD(+) biosynthesis; nicotinate D-ribonucleotide from nicotinate: step 1/1. Functionally, catalyzes the synthesis of beta-nicotinate D-ribonucleotide from nicotinate and 5-phospho-D-ribose 1-phosphate at the expense of ATP. The polypeptide is Nicotinate phosphoribosyltransferase (Salmonella agona (strain SL483)).